The following is a 426-amino-acid chain: MSKDEELLQNYCSILFTYKTIGISNLHLYYFRETEIKSLKQLINAEFAILQTCNRVEIYLYSDTNTLKEVNKIIQYLNNIHNEPIGNQARVLCGKDAAKHLFLVASGADSLSIGEYEILSQIRSTIDMFKKLGFSGKYLQIFFERAIKVGRKVREETSISKGKVGIYSLAIDEAKKRFNDFYDRRILVIGAGEMAQKITSMLHNEGAKDVTIMNRTIEKAKQLALKFGYNYEKLDLDKLGNFDVAFISIYHENLRLENKWNTLIVDITVPPLFTGNNVITLEELERISNLNFKAREEELAKINKLVEDGINELLYDYKKEIYTEFMSKIMKRIETIRENEILRAYKELEKLGINDQQAKEILDLMTRSIIKKSFQPLFDNIRSLIFNGENSINYINFLIDIFKDGNISGFETEKIKEKQVSERSSI.

Substrate is bound by residues 52 to 55, serine 110, 115 to 117, and glutamine 121; these read TCNR and EYE. The active-site Nucleophile is cysteine 53. Position 190 to 195 (190 to 195) interacts with NADP(+); it reads GAGEMA.

This sequence belongs to the glutamyl-tRNA reductase family. Homodimer.

It carries out the reaction (S)-4-amino-5-oxopentanoate + tRNA(Glu) + NADP(+) = L-glutamyl-tRNA(Glu) + NADPH + H(+). The protein operates within porphyrin-containing compound metabolism; protoporphyrin-IX biosynthesis; 5-aminolevulinate from L-glutamyl-tRNA(Glu): step 1/2. Its function is as follows. Catalyzes the NADPH-dependent reduction of glutamyl-tRNA(Glu) to glutamate 1-semialdehyde (GSA). The protein is Glutamyl-tRNA reductase of Saccharolobus solfataricus (strain ATCC 35092 / DSM 1617 / JCM 11322 / P2) (Sulfolobus solfataricus).